Here is a 376-residue protein sequence, read N- to C-terminus: Ribonucleoside-diphosphate reductase subunit beta (376 aa).

Fe cation contacts are provided by Asp85, Glu116, and His119. Residue Tyr123 is part of the active site. The Fe cation site is built by Glu205, Glu239, and His242.

It belongs to the ribonucleoside diphosphate reductase small chain family. Tetramer of two alpha and two beta subunits. Fe cation is required as a cofactor.

It carries out the reaction a 2'-deoxyribonucleoside 5'-diphosphate + [thioredoxin]-disulfide + H2O = a ribonucleoside 5'-diphosphate + [thioredoxin]-dithiol. Functionally, provides the precursors necessary for DNA synthesis. Catalyzes the biosynthesis of deoxyribonucleotides from the corresponding ribonucleotides. The sequence is that of Ribonucleoside-diphosphate reductase subunit beta (nrdB) from Buchnera aphidicola subsp. Baizongia pistaciae (strain Bp).